Consider the following 131-residue polypeptide: D-ribose pyranase (131 aa).

His-20 functions as the Proton donor in the catalytic mechanism. Substrate is bound by residues Asp-28, His-98, and 120–122; that span reads FSN.

Belongs to the RbsD / FucU family. RbsD subfamily. In terms of assembly, homodecamer.

It localises to the cytoplasm. It carries out the reaction beta-D-ribopyranose = beta-D-ribofuranose. It participates in carbohydrate metabolism; D-ribose degradation; D-ribose 5-phosphate from beta-D-ribopyranose: step 1/2. Catalyzes the interconversion of beta-pyran and beta-furan forms of D-ribose. The sequence is that of D-ribose pyranase from Oenococcus oeni (strain ATCC BAA-331 / PSU-1).